The following is a 551-amino-acid chain: Endolytic murein transglycosylase (551 aa).

The Cytoplasmic portion of the chain corresponds to 1–187 (MSEKSREEEK…PKKEKKSHVK (187 aa)). A disordered region spans residues 38-180 (VRTPANEPSA…EGAKPAKPKK (143 aa)). Composition is skewed to low complexity over residues 100–110 (PSSPAEESGSR) and 145–157 (QAGPETPTPATET). Residues 159–174 (DIIRDTSRRSRREGAK) show a composition bias toward basic and acidic residues. A helical membrane pass occupies residues 188–208 (AFVISFLVFLALLSAGGYFGY). The Extracellular segment spans residues 209–551 (QYVLDSLLPI…VAEHVNSKLN (343 aa)).

It belongs to the transglycosylase MltG family. As to quaternary structure, interacts with RodZ. Interacts with MreC in the elongasome; interaction is strongly reduced when the 90 C-terminal residues of MreC are missing. Interacts with KhpB (also called EloR/Jag) via MltG's N-terminus, suggesting the N-terminus of MltG is cytoplasmic.

Its subcellular location is the cell membrane. It catalyses the reaction a peptidoglycan chain = a peptidoglycan chain with N-acetyl-1,6-anhydromuramyl-[peptide] at the reducing end + a peptidoglycan chain with N-acetylglucosamine at the non-reducing end.. Functions as a peptidoglycan terminase that cleaves nascent peptidoglycan strands endolytically to terminate their elongation. Its function is as follows. Mutations in this gene suppress deletion of PBP2b (penA); truncation at residue 168, undefined changes between residue Ile-447 and Ala-505, and mutation of Ala-505 suppress the penA deletion. Probably part of the elongasome which synthesizes peripheral peptidoglycan. The chain is Endolytic murein transglycosylase from Streptococcus pneumoniae (strain ATCC BAA-255 / R6).